Reading from the N-terminus, the 616-residue chain is MGKIIGIDLGTTNSCVAVMEGGEPVVITNSEGARTTPSVVSFQADGERLVGQVAKRQSITNPDKTIISIKRHMGTSYKVDIDGKNYSPQEISAMVLQKIKADAESYLGESVTQAVITVPAYFNDSERQATKDAGKIAGLEVLRIINEPTAAALAYGLDKMDSNHKILVYDLGGGTFDVSILELGDGVFEVLSTNGDTKLGGDDFDQKVMDYIAETFKAENGIDLRQDKMALQRLKEAAEKAKIELSSSMQTNINLPFITADATGPKHIDLNLTRAKFNEITNDLVQRSIEPMKKALSDAAISIDEIEKIILVGGSTRIPAVVEAVKNFTGKDPSKGVNPDECVAVGAAVQAGVLTGEVKDVLLLDVTPLTLGIETAGGIATPLIERNTTIPTKKSQIFSTAADSQTSVEINVVQGERQMAMDNKSLGRFTLSGIAPAPRGIPQIEVTFDIDANGIVKVSALDKGTGKEANITITASTNLNDDEIDKAVKEAEKFAEEDKKRKEKVETLNNADQLIYQTEKALTELGDKVSAEDKAKVTEKLEALKAIKDGEDLEAIKKATEELTQEFYAVSSKVYAAAGGDPSQAGGFDPNAAGGAQQEPHDDNVVDADFKVDDDK.

Residue threonine 175 is modified to Phosphothreonine; by autocatalysis. The tract at residues 579–616 (GGDPSQAGGFDPNAAGGAQQEPHDDNVVDADFKVDDDK) is disordered. Basic and acidic residues predominate over residues 599 to 616 (EPHDDNVVDADFKVDDDK).

The protein belongs to the heat shock protein 70 family.

Functionally, acts as a chaperone. In Clostridium botulinum (strain Eklund 17B / Type B), this protein is Chaperone protein DnaK.